Reading from the N-terminus, the 1409-residue chain is L-2-aminoadipate reductase large subunit (1409 aa).

The 80-residue stretch at 858 to 937 (QALSETEQTL…GFASEIDRLL (80 aa)) folds into the Carrier domain. Serine 896 carries the O-(pantetheine 4'-phosphoryl)serine modification.

The protein belongs to the ATP-dependent AMP-binding enzyme family. As to quaternary structure, heterodimer of an alpha and a beta subunit. Pantetheine 4'-phosphate serves as cofactor.

It catalyses the reaction (S)-2-amino-6-oxohexanoate + NADP(+) + H2O = L-2-aminoadipate + NADPH + 2 H(+). The enzyme catalyses (S)-2-amino-6-oxohexanoate + NAD(+) + H2O = L-2-aminoadipate + NADH + 2 H(+). It carries out the reaction (S)-2-amino-6-oxohexanoate + AMP + diphosphate + NADP(+) = L-2-aminoadipate + ATP + NADPH + H(+). It participates in amino-acid biosynthesis; L-lysine biosynthesis via AAA pathway; L-lysine from L-alpha-aminoadipate (fungal route): step 1/3. Functionally, catalyzes the activation of alpha-aminoadipate by ATP-dependent adenylation and the reduction of activated alpha-aminoadipate by NADPH. The activated alpha-aminoadipate is bound to the phosphopantheinyl group of the enzyme itself before it is reduced to (S)-2-amino-6-oxohexanoate. This chain is L-2-aminoadipate reductase large subunit (lys2), found in Penicillium chrysogenum (Penicillium notatum).